The chain runs to 106 residues: Nucleoid-associated protein XC_3243 (106 aa).

The interval 82–106 (DAESKERMGSATAGMQLPPGMKLPF) is disordered.

This sequence belongs to the YbaB/EbfC family. As to quaternary structure, homodimer.

The protein localises to the cytoplasm. It is found in the nucleoid. Binds to DNA and alters its conformation. May be involved in regulation of gene expression, nucleoid organization and DNA protection. In Xanthomonas campestris pv. campestris (strain 8004), this protein is Nucleoid-associated protein XC_3243.